Here is a 980-residue protein sequence, read N- to C-terminus: Envelope glycoprotein B (980 aa).

Positions 1-14 (MSSGCRSVGGSTWG) are enriched in polar residues. Disordered stretches follow at residues 1-20 (MSSG…RGDG) and 88-118 (TTPS…TETP). Residues 1–86 (MSSGCRSVGG…LFGSCVVRAV (86 aa)) form the signal peptide. Residues 87 to 849 (PTTPSPPTST…SGIASFLNNP (763 aa)) lie on the Virion surface side of the membrane. The segment covering 96–118 (TPTSMSTHSHGTVDPTLLPTETP) has biased composition (low complexity). Disulfide bonds link Cys-140/Cys-647, Cys-157/Cys-603, Cys-231/Cys-296, Cys-389/Cys-437, and Cys-668/Cys-708. N-linked (GlcNAc...) asparagine; by host glycosylation occurs at Asn-165. The interval 197 to 203 (VWKGYSH) is involved in fusion and/or binding to host membrane. An N-linked (GlcNAc...) asparagine; by host glycan is attached at Asn-275. The tract at residues 282 to 290 (GWMPWRHYT) is involved in fusion and/or binding to host membrane. Asn-380, Asn-423, Asn-497, Asn-514, Asn-515, and Asn-560 each carry an N-linked (GlcNAc...) asparagine; by host glycan. The segment covering 505–516 (LLNPNANNNNNT) has biased composition (low complexity). The interval 505–535 (LLNPNANNNNNTTRRRRSLLSVPEPQPTQDG) is disordered. 2 N-linked (GlcNAc...) asparagine; by host glycosylation sites follow: Asn-727 and Asn-749. 2 hydrophobic membrane proximal region regions span residues 794–847 (IDSV…SFLN) and 823–843 (AVGT…SGIA). A helical membrane pass occupies residues 850-870 (FGGLAIGLLVIAGLVAAFFAY). The Intravirion segment spans residues 871–980 (RYVMQIRSNP…NDTMENEKMV (110 aa)). Positions 925 to 928 (YMSM) match the Golgi targeting motif. The Internalization motif motif lies at 965–968 (YTRL).

It belongs to the herpesviridae glycoprotein B family. In terms of assembly, homotrimer; disulfide-linked. Binds to heparan sulfate proteoglycans. Interacts with gH/gL heterodimer. In terms of processing, a proteolytic cleavage by host furin generates two subunits that remain linked by disulfide bonds.

The protein resides in the virion membrane. It localises to the host cell membrane. Its subcellular location is the host endosome membrane. The protein localises to the host Golgi apparatus membrane. Envelope glycoprotein that forms spikes at the surface of virion envelope. Essential for the initial attachment to heparan sulfate moieties of the host cell surface proteoglycans. Involved in fusion of viral and cellular membranes leading to virus entry into the host cell. Following initial binding to its host receptors, membrane fusion is mediated by the fusion machinery composed at least of gB and the heterodimer gH/gL. May be involved in the fusion between the virion envelope and the outer nuclear membrane during virion egress. This chain is Envelope glycoprotein B, found in Equus caballus (Horse).